A 224-amino-acid polypeptide reads, in one-letter code: Probable GTP-binding protein EngB (224 aa).

In terms of domain architecture, EngB-type G spans 31–204 (VGVEIAFAGR…LGILDQWCKP (174 aa)). Residues 39–46 (GRSNAGKS), 65–69 (GRTQL), 83–86 (DLPG), 150–153 (TKAD), and 183–185 (FSS) each bind GTP. Positions 46 and 67 each coordinate Mg(2+).

This sequence belongs to the TRAFAC class TrmE-Era-EngA-EngB-Septin-like GTPase superfamily. EngB GTPase family. Mg(2+) serves as cofactor.

Its function is as follows. Necessary for normal cell division and for the maintenance of normal septation. This is Probable GTP-binding protein EngB from Shewanella piezotolerans (strain WP3 / JCM 13877).